The following is a 1010-amino-acid chain: 2-oxoglutarate dehydrogenase-like, mitochondrial (1010 aa).

The N-terminal 73 residues, 1-73, are a transit peptide targeting the mitochondrion; that stretch reads MSQLRLLPSR…RSVHKSWDSF (73 aa). Residues His130, Asp143, and Asp145 each contribute to the Ca(2+) site. Arg299, Asp398, Asn431, Ile433, and Gln663 together coordinate thiamine diphosphate. Mg(2+) contacts are provided by Asp398, Asn431, and Ile433.

Belongs to the alpha-ketoglutarate dehydrogenase family. In terms of assembly, the OGDHC complex comprises multiple copies of three catalytic enzyme components, the 2-oxoglutarate dehydrogenase (OGDH/E1), the dihydrolipoamide dehydrogenase (DLST/E2) and the dihydrolipoamide dehydrogenase (DLD/E3). OGDHL/E1-like isoenzyme may replace OGDH in the OGDHC complex in the brain. The presence of either ODGH/E1 or ODGHL/E1-like isoenzyme in the complex may depend on its tissular distribution. Requires thiamine diphosphate as cofactor. The cofactor is Mg(2+).

Its subcellular location is the mitochondrion matrix. It catalyses the reaction N(6)-[(R)-lipoyl]-L-lysyl-[protein] + 2-oxoglutarate + H(+) = N(6)-[(R)-S(8)-succinyldihydrolipoyl]-L-lysyl-[protein] + CO2. Functionally, 2-oxoglutarate dehydrogenase (E1-like) component of the 2-oxoglutarate dehydrogenase multienzyme complex (OGDHC) which mediates the decarboxylation of alpha-ketoglutarate in the tricarboxylic acid cycle. The OGDHC complex catalyzes the overall conversion of 2-oxoglutarate to succinyl-CoA and CO(2) while reducing NAD(+) to NADH. The OGDHC complex is mainly active in the mitochondrion. Involved in the inhibition of cell proliferation and in apoptosis. The protein is 2-oxoglutarate dehydrogenase-like, mitochondrial (OGDHL) of Pongo abelii (Sumatran orangutan).